The primary structure comprises 281 residues: MNNLTGILYIVATPIGNLQDITQRALAIFEQVDLIAAEDTRHSGLLLSHYGIKKPFFALHDHNEQQKAHLLVEKLQQGQHIALISDAGTPLISDPGFHLVRQCRQAGIKVVPIPGACAAVTALCASGIASDRFCFEGFLPAKSKARCDKLQNLAEEERTLIFYESTHRILDTLADIEKTLGAERYVVLAREITKTWETIVGDNVANLRQWLGEDPNRTKGEMVLIIEGKVKQETDEINPQALKALELISQSLPLKKAAAIVAEIYGYKKNALYQYGLEHFN.

Belongs to the methyltransferase superfamily. RsmI family.

Its subcellular location is the cytoplasm. It carries out the reaction cytidine(1402) in 16S rRNA + S-adenosyl-L-methionine = 2'-O-methylcytidine(1402) in 16S rRNA + S-adenosyl-L-homocysteine + H(+). In terms of biological role, catalyzes the 2'-O-methylation of the ribose of cytidine 1402 (C1402) in 16S rRNA. This Pasteurella multocida (strain Pm70) protein is Ribosomal RNA small subunit methyltransferase I.